The chain runs to 301 residues: Protoheme IX farnesyltransferase (301 aa).

The next 9 helical transmembrane spans lie at 34–54, 55–75, 102–121, 125–144, 152–172, 181–201, 222–242, 247–267, and 280–300; these read LVVF…HPLI, GLVS…FNMW, AWEC…AIAV, SALL…TMLL, IVIG…SVSG, LFAI…LLTL, SHIL…GLFV, LYEI…IAVF, and GLFK…IACV.

This sequence belongs to the UbiA prenyltransferase family. Protoheme IX farnesyltransferase subfamily.

The protein resides in the cell inner membrane. It catalyses the reaction heme b + (2E,6E)-farnesyl diphosphate + H2O = Fe(II)-heme o + diphosphate. Its pathway is porphyrin-containing compound metabolism; heme O biosynthesis; heme O from protoheme: step 1/1. Converts heme B (protoheme IX) to heme O by substitution of the vinyl group on carbon 2 of heme B porphyrin ring with a hydroxyethyl farnesyl side group. The protein is Protoheme IX farnesyltransferase of Anaplasma marginale (strain Florida).